Consider the following 203-residue polypeptide: Abscisic acid receptor PYL5 (203 aa).

Residues methionine 1 to histidine 18 are compositionally biased toward polar residues. The segment at methionine 1 to proline 29 is disordered. The interval histidine 51–asparagine 201 is START-like. Abscisate is bound by residues lysine 87, alanine 117–glutamate 122, arginine 144–serine 150, and glutamate 166. The Gate loop motif lies at serine 113–alanine 117. Residues histidine 143 to leucine 145 carry the Latch loop motif.

This sequence belongs to the PYR/PYL/RCAR abscisic acid intracellular receptor family. As to quaternary structure, monomer. Homodimer. Binds ABA on one subunit only. Binds to CARs protein in an ABA-independent manner, both at the plasma membrane and in the nucleus. Binds both (-)-ABA and (+)-ABA. Interacts with HAB1, ABI1 and ABI2, and possibly with other PP2Cs.

The protein localises to the cytoplasm. The protein resides in the nucleus. It is found in the cell membrane. Functionally, receptor for abscisic acid (ABA) required for ABA-mediated responses such as stomatal closure and germination inhibition. Inhibits the activity of group-A protein phosphatases type 2C (PP2Cs) in an ABA-independent manner but more efficiently when activated by ABA. Confers enhanced sensitivity to ABA. Can be activated by both (-)-ABA and (+)-ABA. This chain is Abscisic acid receptor PYL5 (PYL5), found in Arabidopsis thaliana (Mouse-ear cress).